A 427-amino-acid polypeptide reads, in one-letter code: MLDIQLLRTQIDAVAAALAARGANFDAAAFQSMENERKTLQTRTQDLQARRNTLSKQIGVLKSRGEDASAAMAEVGGIGDELKANEQALATLLERINAFVAGLPNLPHDSVPPGRDESANVEIARWGTPREFDFEVSDHVDIGSGLGGLDFETAAKISGSRFALMRDGLARLHRALAQFMLDVHTREHGYTEVHVPYLVNPDSMFGTGQLPKFEAELFSVMKDDGRFYLIPTAEVPITNIVRNELLAHDVLPLKFVGHTPCFRSEAGSYGRDTRGMIRQHQFDKVELVRIEHPDASWAALEELTGHAEAILRKLELPYRKVVLCTGDMGFSAAKTYDLEVWLPAQKTYREISSCSCTGAFQARRMQARFRNTQGKNELVHTLNGSGLAVGRTLVAVLENYQQADGSVVVPKVLVPWMGGIEVLEPRG.

232 to 234 (TAE) contributes to the L-serine binding site. Residue 263 to 265 (RSE) coordinates ATP. Glutamate 286 lines the L-serine pocket. 350-353 (EISS) is an ATP binding site. Serine 385 is an L-serine binding site.

This sequence belongs to the class-II aminoacyl-tRNA synthetase family. Type-1 seryl-tRNA synthetase subfamily. In terms of assembly, homodimer. The tRNA molecule binds across the dimer.

It is found in the cytoplasm. It catalyses the reaction tRNA(Ser) + L-serine + ATP = L-seryl-tRNA(Ser) + AMP + diphosphate + H(+). The catalysed reaction is tRNA(Sec) + L-serine + ATP = L-seryl-tRNA(Sec) + AMP + diphosphate + H(+). The protein operates within aminoacyl-tRNA biosynthesis; selenocysteinyl-tRNA(Sec) biosynthesis; L-seryl-tRNA(Sec) from L-serine and tRNA(Sec): step 1/1. Catalyzes the attachment of serine to tRNA(Ser). Is also able to aminoacylate tRNA(Sec) with serine, to form the misacylated tRNA L-seryl-tRNA(Sec), which will be further converted into selenocysteinyl-tRNA(Sec). In Aromatoleum aromaticum (strain DSM 19018 / LMG 30748 / EbN1) (Azoarcus sp. (strain EbN1)), this protein is Serine--tRNA ligase.